The primary structure comprises 1161 residues: Perforin-like protein 1 (1161 aa).

The helical transmembrane segment at 67–86 (LWITFVCLLTLHMFGLSSAV) threads the bilayer. Residues 154–329 (PEALNEVPTK…LGDSSALDLF (176 aa)) form a disordered region. 2 stretches are compositionally biased toward basic and acidic residues: residues 162–177 (TKVE…DKTE) and 184–194 (ADHKSLLEGRS). Positions 201–211 (PDDDFDFLFED) are enriched in acidic residues. The span at 222 to 234 (NKGTSSDETSPGD) shows a compositional bias: polar residues. A compositionally biased stretch (low complexity) spans 238 to 249 (GEGSSASDSLLS). Asparagine 257 carries an N-linked (GlcNAc...) asparagine glycan. Residues 264–283 (NQKRITHPKSKAQHQKKVTK) show a composition bias toward basic residues. Residues 309 to 322 (NTQADDSQRQSLGD) show a composition bias toward polar residues. Asparagine 344 carries N-linked (GlcNAc...) asparagine glycosylation. The tract at residues 353–381 (AANDGGLFSSSGMGPTGASDETSANPLGS) is disordered. Polar residues predominate over residues 361–378 (SSSGMGPTGASDETSANP). The 355-residue stretch at 463-817 (LSAVYTKATK…LTPQDLSALT (355 aa)) folds into the MACPF domain. A disulfide bond links cysteine 539 and cysteine 602. The N-linked (GlcNAc...) asparagine glycan is linked to asparagine 550. A beta stranded membrane pass occupies residues 554 to 589 (YQNELSVDASLQGGDPIGLNSFSASTGYRDFAKEVS). Asparagine 618 carries an N-linked (GlcNAc...) asparagine glycan. An intrachain disulfide couples cysteine 643 to cysteine 657. Residues 694-740 (RSEVEKMRNMGIDVKTQLKMQLGGVSGGAGQGTSSKKNQSSSEYQMN) form a beta stranded membrane-spanning segment. A disordered region spans residues 716-736 (GGVSGGAGQGTSSKKNQSSSE). A glycan (N-linked (GlcNAc...) asparagine) is linked at asparagine 755. 6 cysteine pairs are disulfide-bonded: cysteine 845–cysteine 900, cysteine 874–cysteine 881, cysteine 928–cysteine 981, cysteine 957–cysteine 964, cysteine 1019–cysteine 1080, and cysteine 1047–cysteine 1054. Asparagine 1022, asparagine 1050, and asparagine 1111 each carry an N-linked (GlcNAc...) asparagine glycan. Residues 1094–1149 (VGKAKGNGKKKKGKKGKNKTNAPNEVEEGQQLGADSPSQVSVPADADSGPTSKTMS) form a disordered region. Residues 1099-1111 (GNGKKKKGKKGKN) are compositionally biased toward basic residues.

The protein belongs to the MPEG1 family. As to quaternary structure, homooligomer; forms a homooligomeric pore.

The protein localises to the parasitophorous vacuole membrane. Its subcellular location is the cytoplasmic vesicle. It localises to the secretory vesicle. The protein resides in the microneme membrane. Functionally, pore-forming protein that promotes parasite exit from host cells: mediates formation of a pore in the parasitophorous vacuolar membrane, leading to membrane permeabilization, thereby facilitating parasite egress from host cells. May also form a pore in the host plasma membrane. Preferentially binds inner leaflet lipids, such as phosphatidylethanolamine (PE) or phosphatidylserine (PS). This chain is Perforin-like protein 1, found in Toxoplasma gondii (strain ATCC 50861 / VEG).